Reading from the N-terminus, the 223-residue chain is Cytotoxic T-lymphocyte protein 4 (223 aa).

The first 35 residues, 1 to 35 (MACSGFQSHGAWLELTSRTWPCTALFSLLFIPVFS), serve as a signal peptide directing secretion. Residues 38–161 (MHVAQPAVVL…IDPEPCPDSD (124 aa)) lie on the Extracellular side of the membrane. The region spanning 39–140 (HVAQPAVVLA…VELLYPPPYY (102 aa)) is the Ig-like V-type domain. A homodimerization region spans residues 46–50 (VLANS). Disulfide bonds link cysteine 58-cysteine 129 and cysteine 85-cysteine 103. N-linked (GlcNAc...) asparagine glycosylation is present at asparagine 113. An important for interaction with CD80 and CD86 region spans residues 134-139 (LYPPPY). An N-linked (GlcNAc...) asparagine glycan is attached at asparagine 145. Residues 150-155 (YVIDPE) are homodimerization. The chain crosses the membrane as a helical span at residues 162–182 (FLLWILAAVSSGLFFYSFLIT). Topologically, residues 183-223 (AVSLSKMLKKRSPLTTGVYVKMPPTEPECEKQFQPYFIPIN) are cytoplasmic. Residue tyrosine 201 is modified to Phosphotyrosine; by TXK and JAK2.

Homodimer; disulfide-linked. Binds to CD80/B7-1 and CD86/B7.2. Interacts with ICOSLG. Post-translationally, N-glycosylation is important for dimerization. In terms of processing, phosphorylation at Tyr-201 prevents binding to the AP-2 adapter complex, blocks endocytosis, and leads to retention of CTLA4 on the cell surface.

It localises to the cell membrane. Inhibitory receptor acting as a major negative regulator of T-cell responses. The affinity of CTLA4 for its natural B7 family ligands, CD80 and CD86, is considerably stronger than the affinity of their cognate stimulatory coreceptor CD28. This Sus scrofa (Pig) protein is Cytotoxic T-lymphocyte protein 4 (CTLA4).